We begin with the raw amino-acid sequence, 180 residues long: ATP synthase subunit b, plastid (180 aa).

The helical transmembrane segment at 27 to 49 threads the bilayer; that stretch reads LVTTLINIAVVLSLLIVFGKGFL.

This sequence belongs to the ATPase B chain family. In terms of assembly, F-type ATPases have 2 components, F(1) - the catalytic core - and F(0) - the membrane proton channel. F(1) has five subunits: alpha(3), beta(3), gamma(1), delta(1), epsilon(1). F(0) has four main subunits: a(1), b(1), b'(1) and c(10-14). The alpha and beta chains form an alternating ring which encloses part of the gamma chain. F(1) is attached to F(0) by a central stalk formed by the gamma and epsilon chains, while a peripheral stalk is formed by the delta, b and b' chains.

It localises to the plastid membrane. Its function is as follows. F(1)F(0) ATP synthase produces ATP from ADP in the presence of a proton or sodium gradient. F-type ATPases consist of two structural domains, F(1) containing the extramembraneous catalytic core and F(0) containing the membrane proton channel, linked together by a central stalk and a peripheral stalk. During catalysis, ATP synthesis in the catalytic domain of F(1) is coupled via a rotary mechanism of the central stalk subunits to proton translocation. Functionally, component of the F(0) channel, it forms part of the peripheral stalk, linking F(1) to F(0). This chain is ATP synthase subunit b, plastid, found in Cuscuta gronovii (Common dodder).